The following is a 351-amino-acid chain: Type II restriction enzyme NmeDI (351 aa).

The enzyme catalyses Endonucleolytic cleavage of DNA to give specific double-stranded fragments with terminal 5'-phosphates.. A P subtype restriction enzyme that recognizes the double-stranded sequence 5'-N(12)RCCGGYN(12)-3' and cleaves on both sides of the recognition sequence. The polypeptide is Type II restriction enzyme NmeDI (nmeDIRP) (Neisseria meningitidis serogroup C).